The primary structure comprises 355 residues: Tetraspanin-10 (355 aa).

The interval 1–33 (MEEGERSPLLSQETAGQKPLSVHRPPTSGCLGP) is disordered. Residues 1–78 (MEEGERSPLL…LSPGSSCVKY (78 aa)) are Cytoplasmic-facing. A helical transmembrane segment spans residues 79-99 (LIFLSNFPFSLLGLLALAIGL). Topologically, residues 100–120 (WGLAVKGSLGSDLGGPLPTDP) are extracellular. A helical transmembrane segment spans residues 121–141 (MLGLALGGLVVSAASLAGCLG). Residues 142-154 (ALCENTCLLRGFS) lie on the Cytoplasmic side of the membrane. Residues 155–175 (GGILAFLVLEAVAGALVVALW) form a helical membrane-spanning segment. The Extracellular portion of the chain corresponds to 176-355 (GPLQDSLEHT…APPAAKPARG (180 aa)). 4 disulfide bridges follow: cysteine 212-cysteine 279, cysteine 213-cysteine 243, cysteine 229-cysteine 237, and cysteine 244-cysteine 258. Asparagine 228 carries N-linked (GlcNAc...) asparagine glycosylation. The disordered stretch occupies residues 327 to 355 (YGPGAHGEDRAGPQSPSPGAPPAAKPARG). The span at 341–355 (SPSPGAPPAAKPARG) shows a compositional bias: pro residues.

It belongs to the tetraspanin (TM4SF) family. In terms of assembly, interacts with ADAM10. As to expression, expressed in the eye, including iris, ciliary body, retinal pigment epithelium, but not lens (protein level).

The protein localises to the cell membrane. Part of TspanC8 subgroup, composed of 6 members that interact with the transmembrane metalloprotease ADAM10. This interaction is required for ADAM10 exit from the endoplasmic reticulum and for enzymatic maturation and trafficking to the cell surface as well as substrate specificity. Different TspanC8/ADAM10 complexes have distinct substrates. This is Tetraspanin-10 from Homo sapiens (Human).